A 59-amino-acid chain; its full sequence is Protein SspF (59 aa).

The protein belongs to the alpha/beta-type SASP family.

In terms of biological role, may play some important role in either sporulation or the dormant spore. The sequence is that of Protein SspF (sspF) from Bacillus cereus (strain ATCC 14579 / DSM 31 / CCUG 7414 / JCM 2152 / NBRC 15305 / NCIMB 9373 / NCTC 2599 / NRRL B-3711).